Reading from the N-terminus, the 751-residue chain is Photosystem I P700 chlorophyll a apoprotein A1 (751 aa).

A run of 8 helical transmembrane segments spans residues 73–96 (VFSA…FHGA), 159–182 (LYIT…FHYH), 198–222 (LNHH…HVSL), 294–312 (VAHH…GHMY), 349–372 (WHAQ…QHMY), 388–414 (LSLF…IFMV), 436–458 (AIIS…LYIH), and 533–551 (FLVH…LILL). Residues C575 and C584 each contribute to the [4Fe-4S] cluster site. A run of 2 helical transmembrane segments spans residues 591-612 (HVFL…HFSW) and 665-687 (LSAY…MFLF). H676 lines the chlorophyll a' pocket. Chlorophyll a contacts are provided by M684 and Y692. W693 contacts phylloquinone. The chain crosses the membrane as a helical span at residues 725 to 745 (AVGVAHYLLGGIATTWSFFLA).

Belongs to the PsaA/PsaB family. As to quaternary structure, the PsaA/B heterodimer binds the P700 chlorophyll special pair and subsequent electron acceptors. PSI consists of a core antenna complex that captures photons, and an electron transfer chain that converts photonic excitation into a charge separation. The eukaryotic PSI reaction center is composed of at least 11 subunits. Requires P700 is a chlorophyll a/chlorophyll a' dimer, A0 is one or more chlorophyll a, A1 is one or both phylloquinones and FX is a shared 4Fe-4S iron-sulfur center. as cofactor.

The protein resides in the plastid. It localises to the chloroplast thylakoid membrane. It catalyses the reaction reduced [plastocyanin] + hnu + oxidized [2Fe-2S]-[ferredoxin] = oxidized [plastocyanin] + reduced [2Fe-2S]-[ferredoxin]. Functionally, psaA and PsaB bind P700, the primary electron donor of photosystem I (PSI), as well as the electron acceptors A0, A1 and FX. PSI is a plastocyanin/cytochrome c6-ferredoxin oxidoreductase, converting photonic excitation into a charge separation, which transfers an electron from the donor P700 chlorophyll pair to the spectroscopically characterized acceptors A0, A1, FX, FA and FB in turn. Oxidized P700 is reduced on the lumenal side of the thylakoid membrane by plastocyanin or cytochrome c6. This is Photosystem I P700 chlorophyll a apoprotein A1 from Euglena gracilis.